Consider the following 247-residue polypeptide: Large ribosomal subunit protein uL30 (247 aa).

Met-1 is modified (N-acetylmethionine). A run of 4 repeats spans residues 7–17 (KKKVPAVPETL), 18–29 (KKKRRNFAELKI), 30–41 (KRLRKKFAQKML), and 42–53 (RKARRKLIYEKA). Residues 7 to 53 (KKKVPAVPETLKKKRRNFAELKIKRLRKKFAQKMLRKARRKLIYEKA) are 4 X 12 AA tandem repeats. Residue Thr-16 is modified to Phosphothreonine. Lys-123 carries the post-translational modification N6-acetyllysine. N6-succinyllysine is present on Lys-126. Phosphotyrosine is present on Tyr-138.

It belongs to the universal ribosomal protein uL30 family. In terms of assembly, component of the large ribosomal subunit. Homodimer. Interacts with DHX33.

The protein resides in the cytoplasm. Its function is as follows. Component of the large ribosomal subunit. The ribosome is a large ribonucleoprotein complex responsible for the synthesis of proteins in the cell. Binds to G-rich structures in 28S rRNA and in mRNAs. Plays a regulatory role in the translation apparatus; inhibits cell-free translation of mRNAs. This is Large ribosomal subunit protein uL30 (RPL7) from Macaca fascicularis (Crab-eating macaque).